We begin with the raw amino-acid sequence, 339 residues long: Nicotinate-nucleotide--dimethylbenzimidazole phosphoribosyltransferase (339 aa).

Glutamate 306 functions as the Proton acceptor in the catalytic mechanism.

Belongs to the CobT family.

The enzyme catalyses 5,6-dimethylbenzimidazole + nicotinate beta-D-ribonucleotide = alpha-ribazole 5'-phosphate + nicotinate + H(+). It participates in nucleoside biosynthesis; alpha-ribazole biosynthesis; alpha-ribazole from 5,6-dimethylbenzimidazole: step 1/2. Its function is as follows. Catalyzes the synthesis of alpha-ribazole-5'-phosphate from nicotinate mononucleotide (NAMN) and 5,6-dimethylbenzimidazole (DMB). The chain is Nicotinate-nucleotide--dimethylbenzimidazole phosphoribosyltransferase from Brucella canis (strain ATCC 23365 / NCTC 10854 / RM-666).